A 564-amino-acid polypeptide reads, in one-letter code: Dihydroxy-acid dehydratase (564 aa).

Cysteine 51 is a [2Fe-2S] cluster binding site. Position 83 (aspartate 83) interacts with Mg(2+). Cysteine 124 contacts [2Fe-2S] cluster. Positions 125 and 126 each coordinate Mg(2+). N6-carboxylysine is present on lysine 126. Position 196 (cysteine 196) interacts with [2Fe-2S] cluster. Glutamate 448 serves as a coordination point for Mg(2+). Catalysis depends on serine 474, which acts as the Proton acceptor.

The protein belongs to the IlvD/Edd family. As to quaternary structure, homodimer. [2Fe-2S] cluster serves as cofactor. It depends on Mg(2+) as a cofactor.

The enzyme catalyses (2R)-2,3-dihydroxy-3-methylbutanoate = 3-methyl-2-oxobutanoate + H2O. The catalysed reaction is (2R,3R)-2,3-dihydroxy-3-methylpentanoate = (S)-3-methyl-2-oxopentanoate + H2O. It participates in amino-acid biosynthesis; L-isoleucine biosynthesis; L-isoleucine from 2-oxobutanoate: step 3/4. Its pathway is amino-acid biosynthesis; L-valine biosynthesis; L-valine from pyruvate: step 3/4. Functions in the biosynthesis of branched-chain amino acids. Catalyzes the dehydration of (2R,3R)-2,3-dihydroxy-3-methylpentanoate (2,3-dihydroxy-3-methylvalerate) into 2-oxo-3-methylpentanoate (2-oxo-3-methylvalerate) and of (2R)-2,3-dihydroxy-3-methylbutanoate (2,3-dihydroxyisovalerate) into 2-oxo-3-methylbutanoate (2-oxoisovalerate), the penultimate precursor to L-isoleucine and L-valine, respectively. This Pyrobaculum calidifontis (strain DSM 21063 / JCM 11548 / VA1) protein is Dihydroxy-acid dehydratase.